Here is a 55-residue protein sequence, read N- to C-terminus: GLDTVSFSTKGATYITYVNFLNELRVKTKPEGNSHGIPSLRKSSDDPGSSFVVAG.

The tract at residues 29–55 (KPEGNSHGIPSLRKSSDDPGSSFVVAG) is disordered.

It belongs to the ribosome-inactivating protein family. Type 1 RIP subfamily.

The enzyme catalyses Endohydrolysis of the N-glycosidic bond at one specific adenosine on the 28S rRNA.. Single-chain ribosome-inactivating protein, possessing high antiviral potency and low toxicity to normal cells in culture and to intact animals. Capable of inhibiting HIV-1 infection and replication. In Suregada multiflora (False lime), this protein is Antiviral protein GAP-31.